A 495-amino-acid chain; its full sequence is Thiosulfate sulfurtransferase/rhodanese-like domain-containing protein 2 (495 aa).

The residue at position 268 (Ser268) is a Phosphoserine. Positions Glu300–Tyr395 constitute a Rhodanese domain. Cys354 (cysteine persulfide intermediate) is an active-site residue.

This is Thiosulfate sulfurtransferase/rhodanese-like domain-containing protein 2 (Tstd2) from Mus musculus (Mouse).